A 109-amino-acid chain; its full sequence is Ferredoxin (109 aa).

2 4Fe-4S ferredoxin-type domains span residues 2–30 (TYVV…YEGE) and 31–60 (FMLV…PESP). [3Fe-4S] cluster-binding residues include Cys-9 and Cys-17. Cys-21, Cys-40, Cys-43, and Cys-46 together coordinate [4Fe-4S] cluster. Position 50 (Cys-50) interacts with [3Fe-4S] cluster.

Requires [4Fe-4S] cluster as cofactor. It depends on [3Fe-4S] cluster as a cofactor.

Ferredoxins are iron-sulfur proteins that transfer electrons in a wide variety of metabolic reactions. The polypeptide is Ferredoxin (fdxA) (Rickettsia prowazekii (strain Madrid E)).